The following is a 465-amino-acid chain: Argininosuccinate lyase (465 aa).

It belongs to the lyase 1 family. Argininosuccinate lyase subfamily.

The protein localises to the cytoplasm. The catalysed reaction is 2-(N(omega)-L-arginino)succinate = fumarate + L-arginine. The protein operates within amino-acid biosynthesis; L-arginine biosynthesis; L-arginine from L-ornithine and carbamoyl phosphate: step 3/3. The protein is Argininosuccinate lyase of Aromatoleum aromaticum (strain DSM 19018 / LMG 30748 / EbN1) (Azoarcus sp. (strain EbN1)).